Consider the following 483-residue polypeptide: Trigger factor (483 aa).

The region spanning 162-243 (GDYVSLDLSA…VRGVKEKELP (82 aa)) is the PPIase FKBP-type domain. Positions 459–483 (AVAPGDGDATVEPVEPVEAETDGNG) are disordered. A compositionally biased stretch (acidic residues) spans 473–483 (EPVEAETDGNG).

The protein belongs to the FKBP-type PPIase family. Tig subfamily.

It is found in the cytoplasm. The catalysed reaction is [protein]-peptidylproline (omega=180) = [protein]-peptidylproline (omega=0). In terms of biological role, involved in protein export. Acts as a chaperone by maintaining the newly synthesized protein in an open conformation. Functions as a peptidyl-prolyl cis-trans isomerase. This chain is Trigger factor, found in Frankia casuarinae (strain DSM 45818 / CECT 9043 / HFP020203 / CcI3).